Consider the following 270-residue polypeptide: Formamidopyrimidine-DNA glycosylase (270 aa).

Proline 2 (schiff-base intermediate with DNA) is an active-site residue. The active-site Proton donor is the glutamate 3. The Proton donor; for beta-elimination activity role is filled by lysine 58. Positions 90, 109, and 152 each coordinate DNA. The FPG-type zinc finger occupies 237–270 (RVYGREGEPCHCGTVIRRRVDGGRSTFYCPKCQK). Arginine 260 serves as the catalytic Proton donor; for delta-elimination activity.

Belongs to the FPG family. As to quaternary structure, monomer. It depends on Zn(2+) as a cofactor.

The catalysed reaction is Hydrolysis of DNA containing ring-opened 7-methylguanine residues, releasing 2,6-diamino-4-hydroxy-5-(N-methyl)formamidopyrimidine.. It carries out the reaction 2'-deoxyribonucleotide-(2'-deoxyribose 5'-phosphate)-2'-deoxyribonucleotide-DNA = a 3'-end 2'-deoxyribonucleotide-(2,3-dehydro-2,3-deoxyribose 5'-phosphate)-DNA + a 5'-end 5'-phospho-2'-deoxyribonucleoside-DNA + H(+). In terms of biological role, involved in base excision repair of DNA damaged by oxidation or by mutagenic agents. Acts as a DNA glycosylase that recognizes and removes damaged bases. Has a preference for oxidized purines, such as 7,8-dihydro-8-oxoguanine (8-oxoG). Has AP (apurinic/apyrimidinic) lyase activity and introduces nicks in the DNA strand. Cleaves the DNA backbone by beta-delta elimination to generate a single-strand break at the site of the removed base with both 3'- and 5'-phosphates. The polypeptide is Formamidopyrimidine-DNA glycosylase (Rhizorhabdus wittichii (strain DSM 6014 / CCUG 31198 / JCM 15750 / NBRC 105917 / EY 4224 / RW1) (Sphingomonas wittichii)).